A 1323-amino-acid chain; its full sequence is MEDIELNSVDNLETKGGKEIKKKEKKIGYGGKKSPEENSNFLSNLTFSWADGFVIHCFRNVLQLSHLWDLASYDKSEYLAKKIAKSWEIEIQKPKPSYLRAGFRAFGKLHCISLFFYSIYVGSQFVGPEILSRMVTFVVESKLGTSTEDPNMGYYYALIMFGTAMIGSFCNYQANRVTVRTGDRLRSIIVLDVYKKAIKLSNSARSNTSPGQIVNLISNDAQRMIEVFGILNNGLFALPQIIICLALLYEKIGWPTFVGLGLMLAAIPFNGLAAKKLTETRRILIGHTDGRVKVTSEILQAMKIIKLYAWEDSFAKKVLDRRNNEIKLLFSFTRYRTILIAMIGAIPTAASILVFSTYYGYNGSLDAGKIFSALSYLNLLKIPLGFLPILIALGIQMQIASKRVTDFLLLPEMKEVQQIDNPSLPNGVYMKNSTTTWNKEKEDSFGLKNINFEAKGQSLTMVVGSVGSGKSTLVQAMLGELETIDGEIGIKGSIAYVPQQAWIINATLKENIIFGKELDEERYQKVLEVCALKRDIELFPQGDSVEIGERGINLSGGQKQRVSIARAVYSDADVYILDDPLSAVDSHVGKHLFHKCFKGILSSKTVILVANQINYLPFADNTVVLKSGEIVERGTYYELINAKLEFASLLQEYGVDENTKGDDSDDDDDKKDDDKKEEKVEKPKQSDKDGTLISEEEAEQGAVAGKVYWKYVTAGGGLLFLFAMILFLLETGSKTFTDWWLSHWQTESSERMESILLGEEPTGLTDDQNLGIYIGVGMASIIVTVVRTFSFFEYAVRAAHSIHHELFNALLKKPMSFFDQTPLGRIINRFTRDLDIIDNLIATSIAQFFTLMLSVLATLILISIIVPWLLIPLAPICILFFILQYFYRYTSRGLQRIEAITRSPIFNHFSETLNGVVSIRAYKKQQENILKNQKRLDDNNNCYLTLQAMNRWLGLRLDFLGNLIVFFSCIFITLKKDTISPSDVGLVLSYALSITSNLNQGVLQAADTETKMNSVERISQYIRGAVEAPQIIDDCRPSPDWPINGSIKFDNLVMRYREGLDPVLKGITCEIKAKEKIGIVGRTGAGKSSIVLALFRLIEASEGSISIDGENIAKFGLKDLRRNLAIIPQDPVLFSGTLRENLDPFNECPDHELWSILDDIQLSKVFKSTEEGLNSKVTENGENFSVGQRQLIVLARALLRKPKILVLDEATASVDGQSDSLIQATIRNKFSNCTILTIAHRLNTIMDSDKIMVLDAGKISEFDEPWTLLQNQNGLLTWLVNETGPQNAIYLRKLAEAKKSGLNINEITQIDQQNDNLNTPPRL.

The 287-residue stretch at 110-396 (HCISLFFYSI…LPILIALGIQ (287 aa)) folds into the ABC transmembrane type-1 1 domain. Transmembrane regions (helical) follow at residues 111 to 131 (CISLFFYSIYVGSQFVGPEIL), 152 to 172 (MGYYYALIMFGTAMIGSFCNY), 227 to 247 (VFGILNNGLFALPQIIICLAL), 252 to 272 (IGWPTFVGLGLMLAAIPFNGL), 338 to 358 (ILIAMIGAIPTAASILVFSTY), and 375 to 395 (SYLNLLKIPLGFLPILIALGI). The region spanning 428-652 (VYMKNSTTTW…KLEFASLLQE (225 aa)) is the ABC transporter 1 domain. 464-471 (GSVGSGKS) contacts ATP. The interval 657-695 (ENTKGDDSDDDDDKKDDDKKEEKVEKPKQSDKDGTLISE) is disordered. Basic and acidic residues predominate over residues 672–690 (DDDKKEEKVEKPKQSDKDG). A run of 5 helical transmembrane segments spans residues 712 to 732 (VTAGGGLLFLFAMILFLLETG), 772 to 792 (IYIGVGMASIIVTVVRTFSFF), 840 to 860 (LIATSIAQFFTLMLSVLATLI), 862 to 882 (ISIIVPWLLIPLAPICILFFI), and 952 to 972 (WLGLRLDFLGNLIVFFSCIFI). In terms of domain architecture, ABC transmembrane type-1 2 spans 720–1010 (FLFAMILFLL…GVLQAADTET (291 aa)). Residues 1047–1281 (IKFDNLVMRY…QNGLLTWLVN (235 aa)) enclose the ABC transporter 2 domain. 1081-1088 (GRTGAGKS) provides a ligand contact to ATP.

Belongs to the ABC transporter superfamily. ABCC family. Conjugate transporter (TC 3.A.1.208) subfamily.

The protein resides in the membrane. The sequence is that of ABC transporter C family member 12 (abcC12) from Dictyostelium discoideum (Social amoeba).